The sequence spans 306 residues: Glutaminase (306 aa).

S64, N115, E159, N166, Y190, Y242, and V260 together coordinate substrate.

It belongs to the glutaminase family. As to quaternary structure, homotetramer.

The catalysed reaction is L-glutamine + H2O = L-glutamate + NH4(+). This is Glutaminase from Aliivibrio fischeri (strain MJ11) (Vibrio fischeri).